Consider the following 108-residue polypeptide: Curli assembly protein CsgC (108 aa).

The N-terminal stretch at 1 to 8 is a signal peptide; sequence MHTLLLLA.

Belongs to the CsgC/AgfC family.

It localises to the periplasm. Functionally, plays a role in the extracellular assembly of CsgA into thin aggregative fimbriae (Tafi) fibers. Assembly may also require CsgE. Tafi are thought to be assembled via an extracellular nucleation-precipitation (ENP) pathway, and possibly also via an intracellular non-CsgC-dependent pathway. The sequence is that of Curli assembly protein CsgC from Salmonella arizonae (strain ATCC BAA-731 / CDC346-86 / RSK2980).